A 110-amino-acid chain; its full sequence is Large ribosomal subunit protein P2B (110 aa).

Over residues 73-88 (TPAAGGAAGAEATSAA) the composition is skewed to low complexity. Residues 73–110 (TPAAGGAAGAEATSAAEEAKEEEAAEESDEDMGFGLFD) are disordered. Residues 91–104 (AKEEEAAEESDEDM) show a composition bias toward acidic residues. Position 100 is a phosphoserine (S100).

The protein belongs to the eukaryotic ribosomal protein P1/P2 family. Component of the large ribosomal subunit (LSU). Mature yeast ribosomes consist of a small (40S) and a large (60S) subunit. The 40S small subunit contains 1 molecule of ribosomal RNA (18S rRNA) and at least 33 different proteins. The large 60S subunit contains 3 rRNA molecules (25S, 5.8S and 5S rRNA) and at least 46 different proteins. The acidic ribosomal P-proteins form the stalk structure of the 60S subunit. They are organized as a pentameric complex in which uL10/P0 interacts with 2 heterodimers of P1 and P2 proteins.

It is found in the cytoplasm. Functionally, component of the ribosome, a large ribonucleoprotein complex responsible for the synthesis of proteins in the cell. The small ribosomal subunit (SSU) binds messenger RNAs (mRNAs) and translates the encoded message by selecting cognate aminoacyl-transfer RNA (tRNA) molecules. The large subunit (LSU) contains the ribosomal catalytic site termed the peptidyl transferase center (PTC), which catalyzes the formation of peptide bonds, thereby polymerizing the amino acids delivered by tRNAs into a polypeptide chain. The nascent polypeptides leave the ribosome through a tunnel in the LSU and interact with protein factors that function in enzymatic processing, targeting, and the membrane insertion of nascent chains at the exit of the ribosomal tunnel. In Schizosaccharomyces pombe (strain 972 / ATCC 24843) (Fission yeast), this protein is Large ribosomal subunit protein P2B (rpp202).